Reading from the N-terminus, the 488-residue chain is Envelope glycoprotein gp62 (488 aa).

Residues Met-1–Ser-20 form the signal peptide. Over Asp-21 to Ala-442 the chain is Extracellular. N-linked (GlcNAc...) asparagine; by host glycans are attached at residues Asn-140 and Asn-222. The CXXC motif lies at Cys-225–Cys-228. 3 disulfide bridges follow: Cys-225–Cys-228, Cys-225–Cys-401, and Cys-393–Cys-400. N-linked (GlcNAc...) asparagine; by host glycans are attached at residues Asn-244 and Asn-272. The segment at Ala-313 to Gly-333 is fusion peptide. Coiled coils occupy residues Ala-341–Trp-387 and Gln-397–Leu-429. Residues Ala-376–Leu-392 are immunosuppression. The CX6CC signature appears at Cys-393 to Cys-401. Asn-404 carries an N-linked (GlcNAc...) asparagine; by host glycan. The chain crosses the membrane as a helical span at residues Leu-443–Ile-463. A lipid anchor (S-palmitoyl cysteine; by host) is attached at Cys-462. Residues Leu-464–Leu-488 are Cytoplasmic-facing.

As to quaternary structure, the mature envelope protein (Env) consists of a trimer of SU-TM heterodimers attached by a labile interchain disulfide bond. In terms of processing, specific enzymatic cleavages in vivo yield mature proteins. Envelope glycoproteins are synthesized as an inactive precursor that is N-glycosylated and processed likely by host cell furin or by a furin-like protease in the Golgi to yield the mature SU and TM proteins. The cleavage site between SU and TM requires the minimal sequence [KR]-X-[KR]-R. Post-translationally, the CXXC motif is highly conserved across a broad range of retroviral envelope proteins. It is thought to participate in the formation of a labile disulfide bond possibly with the CX6CC motif present in the transmembrane protein. Isomerization of the intersubunit disulfide bond to an SU intrachain disulfide bond is thought to occur upon receptor recognition in order to allow membrane fusion. The transmembrane protein is palmitoylated.

Its subcellular location is the virion membrane. The protein resides in the host cell membrane. Its function is as follows. The surface protein (SU) attaches the virus to the host cell by binding to its receptor. This interaction triggers the refolding of the transmembrane protein (TM) and is thought to activate its fusogenic potential by unmasking its fusion peptide. Fusion occurs at the host cell plasma membrane. The transmembrane protein (TM) acts as a class I viral fusion protein. Under the current model, the protein has at least 3 conformational states: pre-fusion native state, pre-hairpin intermediate state, and post-fusion hairpin state. During viral and target cell membrane fusion, the coiled coil regions (heptad repeats) assume a trimer-of-hairpins structure, positioning the fusion peptide in close proximity to the C-terminal region of the ectodomain. The formation of this structure appears to drive apposition and subsequent fusion of viral and target cell membranes. Membranes fusion leads to delivery of the nucleocapsid into the cytoplasm. The sequence is that of Envelope glycoprotein gp62 (env) from Human T-cell leukemia virus 1 (isolate Zaire EL subtype B) (HTLV-1).